Here is a 313-residue protein sequence, read N- to C-terminus: Protoheme IX farnesyltransferase (313 aa).

9 helical membrane-spanning segments follow: residues 35–55 (LVVF…HPVL), 56–76 (AATS…LNMW), 98–118 (VSSP…VATL), 120–140 (VLVN…YAVV), 153–173 (IVIG…AATG), 180–200 (IILF…LALF), 226–246 (ILLY…LGYF), 248–268 (AAYG…AFNV), and 292–312 (LFLL…AAMI).

This sequence belongs to the UbiA prenyltransferase family. Protoheme IX farnesyltransferase subfamily.

The protein localises to the cell inner membrane. It catalyses the reaction heme b + (2E,6E)-farnesyl diphosphate + H2O = Fe(II)-heme o + diphosphate. Its pathway is porphyrin-containing compound metabolism; heme O biosynthesis; heme O from protoheme: step 1/1. Its function is as follows. Converts heme B (protoheme IX) to heme O by substitution of the vinyl group on carbon 2 of heme B porphyrin ring with a hydroxyethyl farnesyl side group. The polypeptide is Protoheme IX farnesyltransferase (Afipia carboxidovorans (strain ATCC 49405 / DSM 1227 / KCTC 32145 / OM5) (Oligotropha carboxidovorans)).